The primary structure comprises 148 residues: UPF0756 membrane protein YeaL (148 aa).

A run of 4 helical transmembrane segments spans residues 14-34, 51-71, 86-106, and 121-141; these read ALGFISHNTTVAVSILVLIIV, LTVGIIILTIGVMAPIASGTL, LVAIAVGVFVSWLGGRGITLM, and VLGVALFRGVPVGPLIAAGLV.

Belongs to the UPF0756 family.

It localises to the cell membrane. In Salmonella choleraesuis (strain SC-B67), this protein is UPF0756 membrane protein YeaL.